Reading from the N-terminus, the 345-residue chain is Anthranilate phosphoribosyltransferase (345 aa).

5-phospho-alpha-D-ribose 1-diphosphate-binding positions include Gly-79, 82-83 (GD), Thr-87, 89-92 (NVST), 106-114 (KHGNRAVSG), and Ser-118. Residue Gly-79 coordinates anthranilate. Residue Ser-91 coordinates Mg(2+). Asn-109 serves as a coordination point for anthranilate. Arg-164 is a binding site for anthranilate. Positions 223 and 224 each coordinate Mg(2+).

The protein belongs to the anthranilate phosphoribosyltransferase family. As to quaternary structure, homodimer. It depends on Mg(2+) as a cofactor.

The enzyme catalyses N-(5-phospho-beta-D-ribosyl)anthranilate + diphosphate = 5-phospho-alpha-D-ribose 1-diphosphate + anthranilate. It functions in the pathway amino-acid biosynthesis; L-tryptophan biosynthesis; L-tryptophan from chorismate: step 2/5. Its function is as follows. Catalyzes the transfer of the phosphoribosyl group of 5-phosphorylribose-1-pyrophosphate (PRPP) to anthranilate to yield N-(5'-phosphoribosyl)-anthranilate (PRA). The polypeptide is Anthranilate phosphoribosyltransferase (Saccharolobus islandicus (strain M.14.25 / Kamchatka #1) (Sulfolobus islandicus)).